The sequence spans 138 residues: Protein NrdI (138 aa).

This sequence belongs to the NrdI family.

Probably involved in ribonucleotide reductase function. The chain is Protein NrdI from Mycobacterium leprae (strain TN).